The sequence spans 374 residues: MHNESPIIRRKSTRIYVGKVPIGDGAPITVQSMTNTKTTDVAATVAQIKALERVGVDIVRVSVPTMDAAEAFKLIKQQSNVPLVADIHFDYRIALKVAEYGVDCLRINPGNIGSEERIRSVVDCARHHNIPIRIGINGGSLEKDIQEKYGEPTPEALLESAMRHVDILDRLNFDQFKVSVKASDVYLAVNSYRLLAKQINNPLHLGITEAGGARSGSVKSAIGLGLLLSEGIGDTLRISLAADPVEEVKVGFDILKSLRIRSRGINFIACPTCSRQEFDVIGTVNALEQRLEDLITPMDVSIIGCVVNGPGEALVSTIGVTGARNHSGFYEDGVRQRERFDNEKMIDQLEAKIRAKASMLDANNRIVINMLEEK.

Residues Cys-270, Cys-273, Cys-305, and Glu-312 each coordinate [4Fe-4S] cluster.

It belongs to the IspG family. [4Fe-4S] cluster serves as cofactor.

It catalyses the reaction (2E)-4-hydroxy-3-methylbut-2-enyl diphosphate + oxidized [flavodoxin] + H2O + 2 H(+) = 2-C-methyl-D-erythritol 2,4-cyclic diphosphate + reduced [flavodoxin]. Its pathway is isoprenoid biosynthesis; isopentenyl diphosphate biosynthesis via DXP pathway; isopentenyl diphosphate from 1-deoxy-D-xylulose 5-phosphate: step 5/6. Functionally, converts 2C-methyl-D-erythritol 2,4-cyclodiphosphate (ME-2,4cPP) into 1-hydroxy-2-methyl-2-(E)-butenyl 4-diphosphate. In Yersinia enterocolitica serotype O:8 / biotype 1B (strain NCTC 13174 / 8081), this protein is 4-hydroxy-3-methylbut-2-en-1-yl diphosphate synthase (flavodoxin).